Consider the following 431-residue polypeptide: ETS domain-containing protein Elk-4 (431 aa).

The segment at residues 5 to 85 is a DNA-binding region (ETS); the sequence is ITLWQFLLQL…NGQKFVYKFV (81 aa). A disordered region spans residues 114-139; sequence SSSSKDVENGGKDKPPQPGAKTSSRN. Residues 118 to 128 are compositionally biased toward basic and acidic residues; that stretch reads KDVENGGKDKP. Lysine 167 is covalently cross-linked (Glycyl lysine isopeptide (Lys-Gly) (interchain with G-Cter in SUMO2)). Serine 180 carries the post-translational modification Phosphoserine. Disordered regions lie at residues 251 to 282, 294 to 323, and 411 to 431; these read TTPP…DTDI, ENLS…KKPK, and TLSG…LQKT. Residues 261–273 show a composition bias toward pro residues; the sequence is LQEPPRTPSPPLS. Residues 299-313 are compositionally biased toward basic and acidic residues; the sequence is EPKDQDSVLLEKDKV.

The protein belongs to the ETS family. As to quaternary structure, interacts with SIRT7.

The protein localises to the nucleus. In terms of biological role, involved in both transcriptional activation and repression. Interaction with SIRT7 leads to recruitment and stabilization of SIRT7 at promoters, followed by deacetylation of histone H3 at 'Lys-18' (H3K18Ac) and subsequent transcription repression. Forms a ternary complex with the serum response factor (SRF). Requires DNA-bound SRF for ternary complex formation and makes extensive DNA contacts to the 5'side of SRF, but does not bind DNA autonomously. In Homo sapiens (Human), this protein is ETS domain-containing protein Elk-4 (ELK4).